A 553-amino-acid polypeptide reads, in one-letter code: MSDIAITISLLALVAVIGLWIGHWKIRGVGLGIGGVLFGGIIVAHFTNQYGLKLDAHTMHFIQEFGLILFVYTIGIQVGPGFFASLRQSGLKLNGFAALIVLLGSLAVIVIHKLADVPLDIILGIYSGAVTNTPSLGAGQQILSELGLTQTTSTMGMAYAMAYPFGICGILLSMWLIRLFFRIKIDDEAKNFLKESGQDKETLGSINVRVTNPNLDGLRLVDIPGFDEKRDVVCTRLKRDEHISVPQANTIIQKGDLLHLVGEIPLLRKIKLVLGEEVDVPLSSFTGDLRSDRIVVTNEKVLGKKIRALGIHQKYGVVISRLNRAGVELVPTANTALQFGDVLHVVGRSEVLNQAVSILGNAQQKLQQVQMLPVFIGIGLGVLLGSIPFHIPGFPVPLKLGLAGGPLVVALILARIGSIGKLYWFMPPSANLALREIGIVLFLAVVGLKSGGNFVDTLVNGSGLEWMVYGIFITFVPLMIVGIVARLYAKMNYLSLCGLLAGSMTDPPALAFANAIKEESGASALSYATVYPLVMFLRIISPQLLAILLWTLL.

Transmembrane regions (helical) follow at residues 4-24, 28-48, 65-85, 91-111, and 157-177; these read IAIT…IGHW, GVGL…HFTN, FGLI…FFAS, LKLN…VIVI, and MAYA…MWLI. 2 consecutive RCK C-terminal domains span residues 190–276 and 277–361; these read KNFL…VLGE and EVDV…ILGN. The next 6 helical transmembrane spans lie at 371–391, 403–425, 439–459, 464–484, 496–516, and 533–553; these read MLPV…PFHI, AGGP…LYWF, IVLF…DTLV, LEWM…VGIV, LCGL…ANAI, and LVMF…WTLL.

Belongs to the AAE transporter (TC 2.A.81) family. YidE subfamily.

Its subcellular location is the cell membrane. The polypeptide is Putative transport protein PM1071 (Pasteurella multocida (strain Pm70)).